The primary structure comprises 223 residues: Flagellar L-ring protein (223 aa).

An N-terminal signal peptide occupies residues 1–18 (MKKSLMALIVVGSFLLSA). The N-palmitoyl cysteine moiety is linked to residue cysteine 19. The S-diacylglycerol cysteine moiety is linked to residue cysteine 19.

It belongs to the FlgH family. In terms of assembly, the basal body constitutes a major portion of the flagellar organelle and consists of four rings (L,P,S, and M) mounted on a central rod.

Its subcellular location is the cell outer membrane. The protein localises to the bacterial flagellum basal body. Assembles around the rod to form the L-ring and probably protects the motor/basal body from shearing forces during rotation. This is Flagellar L-ring protein from Herminiimonas arsenicoxydans.